We begin with the raw amino-acid sequence, 332 residues long: tRNA(Ile)-lysidine synthase (332 aa).

39-44 (SGGADS) serves as a coordination point for ATP.

Belongs to the tRNA(Ile)-lysidine synthase family.

It localises to the cytoplasm. The enzyme catalyses cytidine(34) in tRNA(Ile2) + L-lysine + ATP = lysidine(34) in tRNA(Ile2) + AMP + diphosphate + H(+). Its function is as follows. Ligates lysine onto the cytidine present at position 34 of the AUA codon-specific tRNA(Ile) that contains the anticodon CAU, in an ATP-dependent manner. Cytidine is converted to lysidine, thus changing the amino acid specificity of the tRNA from methionine to isoleucine. The polypeptide is tRNA(Ile)-lysidine synthase (Leifsonia xyli subsp. xyli (strain CTCB07)).